The sequence spans 499 residues: Neuronal acetylcholine receptor subunit alpha-7 (499 aa).

An N-terminal signal peptide occupies residues M1–Q19. The Extracellular portion of the chain corresponds to G20–Y230. Ca(2+)-binding residues include R39 and V41. 3 N-linked (GlcNAc...) asparagine glycosylation sites follow: N43, N87, and N130. C147 and C161 are disulfide-bonded. The Ca(2+) site is built by S169 and Y207. C209 and C210 are oxidised to a cystine. 3 helical membrane-spanning segments follow: residues G231–L251, I259–I279, and Q292–L312. Residues E257 to T264 are essential for TMEM35A/NACHO-mediated proper subunit assembly and trafficking to cell membrane. Residues Q313 to R466 are Cytoplasmic-facing. The chain crosses the membrane as a helical span at residues L467 to A487.

It belongs to the ligand-gated ion channel (TC 1.A.9) family. Acetylcholine receptor (TC 1.A.9.1) subfamily. Alpha-7/CHRNA7 sub-subfamily. As to quaternary structure, homopentamer. Homooligomer of the short form gives rise to unfunctional channels, as does coexpression of both long and short forms of the receptor. Can also form heteropentamers with CHRNB2, mainly found in basal forebrain cholinergic neurons. Interacts with RIC3; which is required for proper folding and assembly. Interacts with LYPD6. Interacts with CANX. Glycosylations at Asn-43, Asn-87 and Asn-130 are essential for TMEM35A/NACHO-mediated proper subunit assembly and trafficking to the cell membrane. As to expression, at least in chromaffin cells.

Its subcellular location is the postsynaptic cell membrane. The protein localises to the cell membrane. It catalyses the reaction Ca(2+)(in) = Ca(2+)(out). It carries out the reaction K(+)(in) = K(+)(out). The catalysed reaction is Na(+)(in) = Na(+)(out). The enzyme catalyses choline(out) = choline(in). It catalyses the reaction NH4(+)(in) = NH4(+)(out). It carries out the reaction L-arginine(in) = L-arginine(out). The catalysed reaction is guanidine(out) = guanidine(in). With respect to regulation, activated by a myriad of ligands such as acetylcholine, cytisine, nicotine, choline and epibatidine. Oligomeric amyloid-beta protein 42 activates specifially CHRNA7:CHRNB2 nAchRs. Activity is modulated by positive allosteric modulators (PAMs), such as flavonoids, with a wide range of chemical diversity, pharmacological sensitivity and efficacy. AChR activity is inhibited by the antagonists alpha-conotoxons RgIA, ImI and ImII, small disulfide-constrained peptides from cone snails. Alpha-conotoxin PnIC selectively inhibits CHRNA7:CHRNB2 over CHRNA7 homopentamer. In terms of biological role, component of neuronal acetylcholine receptors (nAChRs) that function as pentameric, ligand-gated cation channels with high calcium permeability among other activities. nAChRs are excitatory neurotrasnmitter receptors formed by a collection of nAChR subunits known to mediate synaptic transmission in the nervous system and the neuromuscular junction. Each nAchR subunit confers differential attributes to channel properties, including activation, deactivation and desensitization kinetics, pH sensitivity, cation permeability, and binding to allosteric modulators. CHRNA7 forms homopentameric neuronal acetylcholine receptors abundantly expressed in the central nervous system, characterized by fast desensitization and high calcium permeability. Also forms heteropentamers with CHRNB2, mainly expressed in basal forebrain cholinergic neurons. Involved in the modulation of calcium-dependent signaling pathways and influences the release of neurotransmitters, including dopamine, glutamate and GABA. Also expressed in non-neuronal cells such as immune cells like lymphocytes, monocytes and macrophages. In T cells, activation induces metabotropic signaling that results in an increase of intracellular Ca2+ concentrations, independent of ionotropic receptor functions. In macrophages, required for acetylcholine-mediated inhibition of TNF and other inflammatory cytokine release. Once activated by acetylcholine, nicotine or other agonists, selectively inhibits production of pro-inflammatory cytokines while leaving anti-inflammatory cytokines undisturbed. Stimulates the cholinergic anti-inflammatory pathway, controlling inflammation by inhibiting NFKB nuclear translocation and activating the JAK2-STAT3 pathway, independently of ion channel activity. Also expressed in the urothelium where it modulates reflex bladder activity by increasing intracellular calcium through internal stores and decreasing basal ATP release. This chain is Neuronal acetylcholine receptor subunit alpha-7 (CHRNA7), found in Bos taurus (Bovine).